The primary structure comprises 386 residues: ORC1-type DNA replication protein 3 (386 aa).

ATP-binding positions include 65–69 and Tyr-206; that span reads TGKTF.

This sequence belongs to the CDC6/cdc18 family.

Its function is as follows. Involved in regulation of DNA replication. This is ORC1-type DNA replication protein 3 (cdc6-3) from Sulfurisphaera tokodaii (strain DSM 16993 / JCM 10545 / NBRC 100140 / 7) (Sulfolobus tokodaii).